The following is a 242-amino-acid chain: NAD(P)H-quinone oxidoreductase subunit K (242 aa).

The [4Fe-4S] cluster site is built by cysteine 59, cysteine 60, cysteine 124, and cysteine 155.

It belongs to the complex I 20 kDa subunit family. In terms of assembly, NDH-1 can be composed of about 15 different subunits; different subcomplexes with different compositions have been identified which probably have different functions. Requires [4Fe-4S] cluster as cofactor.

Its subcellular location is the cellular thylakoid membrane. The catalysed reaction is a plastoquinone + NADH + (n+1) H(+)(in) = a plastoquinol + NAD(+) + n H(+)(out). The enzyme catalyses a plastoquinone + NADPH + (n+1) H(+)(in) = a plastoquinol + NADP(+) + n H(+)(out). Its function is as follows. NDH-1 shuttles electrons from an unknown electron donor, via FMN and iron-sulfur (Fe-S) centers, to quinones in the respiratory and/or the photosynthetic chain. The immediate electron acceptor for the enzyme in this species is believed to be plastoquinone. Couples the redox reaction to proton translocation, and thus conserves the redox energy in a proton gradient. Cyanobacterial NDH-1 also plays a role in inorganic carbon-concentration. This Synechococcus sp. (strain RCC307) protein is NAD(P)H-quinone oxidoreductase subunit K.